Here is a 404-residue protein sequence, read N- to C-terminus: Caspase-1 (404 aa).

Residues 1-91 (MADKVLKEKR…HLAGVLELST (91 aa)) form the CARD domain. The propeptide occupies 1-119 (MADKVLKEKR…PFPAPQTVQD (119 aa)). The tract at residues 111–132 (FPAPQTVQDNPVKPASSEPRGS) is disordered. Catalysis depends on residues H237 and C285. Residues 298-316 (SVGPSGNSSLLAAEDFEYD) constitute a propeptide that is removed on maturation. Phosphoserine is present on S302.

The protein belongs to the peptidase C14A family. As to quaternary structure, heterotetramer that consists of two anti-parallel arranged heterodimers, each one formed by a 20 kDa (Caspase-1 subunit p20) and a 10 kDa (Caspase-1 subunit p10) subunit. May be a component of the inflammasome, a protein complex which also includes PYCARD, CARD8 and NLRP2 and whose function would be the activation of pro-inflammatory caspases. Component of the AIM2 PANoptosome complex, a multiprotein complex that drives inflammatory cell death (PANoptosis). Both the p10 and p20 subunits interact with MEFV. Interacts with CARD17P/INCA and CARD18. Interacts with SERPINB1; this interaction regulates CASP1 activity. In terms of assembly, heterotetramer that consists of two anti-parallel arranged heterodimers, each one formed by a 20 kDa (Caspase-1 subunit p20) and a 10 kDa (Caspase-1 subunit p10) subunit. Post-translationally, the two subunits are derived from the precursor sequence by an autocatalytic mechanism. In terms of processing, ubiquitinated via 'Lys-11'-linked polyubiquitination. Deubiquitinated by USP8.

The protein resides in the cytoplasm. The protein localises to the cell membrane. The enzyme catalyses Strict requirement for an Asp residue at position P1 and has a preferred cleavage sequence of Tyr-Val-Ala-Asp-|-.. Thiol protease involved in a variety of inflammatory processes by proteolytically cleaving other proteins, such as the precursors of the inflammatory cytokines interleukin-1 beta (IL1B) and interleukin 18 (IL18) as well as the pyroptosis inducer Gasdermin-D (GSDMD), into active mature peptides. Plays a key role in cell immunity as an inflammatory response initiator: once activated through formation of an inflammasome complex, it initiates a pro-inflammatory response through the cleavage of the two inflammatory cytokines IL1B and IL18, releasing the mature cytokines which are involved in a variety of inflammatory processes. Cleaves a tetrapeptide after an Asp residue at position P1. Also initiates pyroptosis, a programmed lytic cell death pathway, through cleavage of GSDMD. In contrast to cleavage of interleukin IL1B, recognition and cleavage of GSDMD is not strictly dependent on the consensus cleavage site but depends on an exosite interface on CASP1 that recognizes and binds the Gasdermin-D, C-terminal (GSDMD-CT) part. Cleaves and activates CASP7 in response to bacterial infection, promoting plasma membrane repair. Upon inflammasome activation, during DNA virus infection but not RNA virus challenge, controls antiviral immunity through the cleavage of CGAS, rendering it inactive. In apoptotic cells, cleaves SPHK2 which is released from cells and remains enzymatically active extracellularly. In Sus scrofa (Pig), this protein is Caspase-1 (CASP1).